The sequence spans 643 residues: Phosphomethylpyrimidine synthase (643 aa).

Substrate contacts are provided by residues Asn-248, Met-277, Tyr-306, His-342, 362 to 364, 403 to 406, and Glu-442; these read SRG and DGLR. A Zn(2+)-binding site is contributed by His-446. Residue Tyr-469 coordinates substrate. Residue His-510 participates in Zn(2+) binding. [4Fe-4S] cluster is bound by residues Cys-590, Cys-593, and Cys-598.

The protein belongs to the ThiC family. As to quaternary structure, homodimer. The cofactor is [4Fe-4S] cluster.

It catalyses the reaction 5-amino-1-(5-phospho-beta-D-ribosyl)imidazole + S-adenosyl-L-methionine = 4-amino-2-methyl-5-(phosphooxymethyl)pyrimidine + CO + 5'-deoxyadenosine + formate + L-methionine + 3 H(+). Its pathway is cofactor biosynthesis; thiamine diphosphate biosynthesis. In terms of biological role, catalyzes the synthesis of the hydroxymethylpyrimidine phosphate (HMP-P) moiety of thiamine from aminoimidazole ribotide (AIR) in a radical S-adenosyl-L-methionine (SAM)-dependent reaction. This is Phosphomethylpyrimidine synthase from Burkholderia lata (strain ATCC 17760 / DSM 23089 / LMG 22485 / NCIMB 9086 / R18194 / 383).